The following is a 394-amino-acid chain: Argininosuccinate synthase (394 aa).

Residues 7–15 (AYSGGLDTS) and Ala-34 each bind ATP. Residues Tyr-85 and Ser-90 each coordinate L-citrulline. Gly-115 contributes to the ATP binding site. L-aspartate is bound by residues Thr-117, Asn-121, and Asp-122. Asn-121 provides a ligand contact to L-citrulline. Positions 125, 176, 185, 261, and 273 each coordinate L-citrulline.

The protein belongs to the argininosuccinate synthase family. Type 1 subfamily. As to quaternary structure, homotetramer.

The protein localises to the cytoplasm. It carries out the reaction L-citrulline + L-aspartate + ATP = 2-(N(omega)-L-arginino)succinate + AMP + diphosphate + H(+). The protein operates within amino-acid biosynthesis; L-arginine biosynthesis; L-arginine from L-ornithine and carbamoyl phosphate: step 2/3. The chain is Argininosuccinate synthase from Ehrlichia ruminantium (strain Gardel).